The primary structure comprises 462 residues: Bifunctional protein HldE (462 aa).

A ribokinase region spans residues 1 to 309; the sequence is MKPRILVLGD…EYERSIRKAP (309 aa). 186-189 serves as a coordination point for ATP; it reads NKKE. Aspartate 254 is a catalytic residue. Residues 336–462 form a cytidylyltransferase region; it reads FTNGCFDILH…TAIVERMRSC (127 aa).

This sequence in the N-terminal section; belongs to the carbohydrate kinase PfkB family. In the C-terminal section; belongs to the cytidylyltransferase family. As to quaternary structure, homodimer.

It carries out the reaction D-glycero-beta-D-manno-heptose 7-phosphate + ATP = D-glycero-beta-D-manno-heptose 1,7-bisphosphate + ADP + H(+). The catalysed reaction is D-glycero-beta-D-manno-heptose 1-phosphate + ATP + H(+) = ADP-D-glycero-beta-D-manno-heptose + diphosphate. It functions in the pathway nucleotide-sugar biosynthesis; ADP-L-glycero-beta-D-manno-heptose biosynthesis; ADP-L-glycero-beta-D-manno-heptose from D-glycero-beta-D-manno-heptose 7-phosphate: step 1/4. It participates in nucleotide-sugar biosynthesis; ADP-L-glycero-beta-D-manno-heptose biosynthesis; ADP-L-glycero-beta-D-manno-heptose from D-glycero-beta-D-manno-heptose 7-phosphate: step 3/4. In terms of biological role, catalyzes the phosphorylation of D-glycero-D-manno-heptose 7-phosphate at the C-1 position to selectively form D-glycero-beta-D-manno-heptose-1,7-bisphosphate. Catalyzes the ADP transfer from ATP to D-glycero-beta-D-manno-heptose 1-phosphate, yielding ADP-D-glycero-beta-D-manno-heptose. The polypeptide is Bifunctional protein HldE (Nitratiruptor sp. (strain SB155-2)).